The following is an 807-amino-acid chain: Glycerol-3-phosphate acyltransferase (807 aa).

The HXXXXD motif signature appears at 308-313 (CHRSHM).

The protein belongs to the GPAT/DAPAT family.

The protein resides in the cell inner membrane. The enzyme catalyses sn-glycerol 3-phosphate + an acyl-CoA = a 1-acyl-sn-glycero-3-phosphate + CoA. It participates in phospholipid metabolism; CDP-diacylglycerol biosynthesis; CDP-diacylglycerol from sn-glycerol 3-phosphate: step 1/3. The sequence is that of Glycerol-3-phosphate acyltransferase from Shewanella baltica (strain OS155 / ATCC BAA-1091).